A 140-amino-acid polypeptide reads, in one-letter code: Large ribosomal subunit protein uL11 (140 aa).

This sequence belongs to the universal ribosomal protein uL11 family. In terms of assembly, part of the ribosomal stalk of the 50S ribosomal subunit. Interacts with L10 and the large rRNA to form the base of the stalk. L10 forms an elongated spine to which L12 dimers bind in a sequential fashion forming a multimeric L10(L12)X complex. Post-translationally, one or more lysine residues are methylated.

Functionally, forms part of the ribosomal stalk which helps the ribosome interact with GTP-bound translation factors. The polypeptide is Large ribosomal subunit protein uL11 (Campylobacter hominis (strain ATCC BAA-381 / DSM 21671 / CCUG 45161 / LMG 19568 / NCTC 13146 / CH001A)).